A 483-amino-acid polypeptide reads, in one-letter code: Chromatin structure-remodeling complex protein RSC6 (483 aa).

Disordered regions lie at residues 142–183 (KRKR…EAES) and 273–309 (AQDG…DKPE). Positions 148 to 158 (SLSLPLNLQQP) are enriched in low complexity. The span at 171–180 (DNGEDEDSAE) shows a compositional bias: acidic residues.

The protein to yeast SNF12. Interacts directly with RSC8. Component of the two forms of the RSC complex composed of at least either RSC1 or RSC2, and ARP7, ARP9, LDB7, NPL6, RSC3, RSC30, RSC4, RSC58, RSC6, RSC8, RSC9, SFH1, STH1, HTL1 and probably RTT102. The complexes interact with histone and histone variant components of centromeric chromatin.

The protein resides in the nucleus. Component of the chromatin structure-remodeling complex (RSC), which is involved in transcription regulation and nucleosome positioning. RSC is responsible for the transfer of a histone octamer from a nucleosome core particle to naked DNA. The reaction requires ATP and involves an activated RSC-nucleosome intermediate. Remodeling reaction also involves DNA translocation, DNA twist and conformational change. As a reconfigurer of centromeric and flanking nucleosomes, RSC complex is required both for proper kinetochore function in chromosome segregation and, via a PKC1-dependent signaling pathway, for organization of the cellular cytoskeleton. This subunit is essential for mitotic growth and suppresses formamide sensitivity of the RSC8 mutants. The chain is Chromatin structure-remodeling complex protein RSC6 (RSC6) from Saccharomyces cerevisiae (strain ATCC 204508 / S288c) (Baker's yeast).